A 174-amino-acid polypeptide reads, in one-letter code: MAAPSGRRNGSGGANLWVSLLLAAAALRPVETVSEPTTVAFDVRPGGVVHSFSQNVGPGDKYTCVFTYASQGGTNEKWQMSLGTSEDHQHFTCTIWRPQGKSYLYFTQFKAEVRGAEIEYGMAYSKAAFEKESDVPLKNEEFEVTKTAVFHRPGAFKAELSKLVIVAKATRSEL.

An N-terminal signal peptide occupies residues methionine 1–threonine 32.

The protein belongs to the MYDGF family.

Its subcellular location is the secreted. It localises to the endoplasmic reticulum-Golgi intermediate compartment. It is found in the endoplasmic reticulum. The protein resides in the golgi apparatus. Bone marrow-derived monocyte and paracrine-acting protein that promotes cardiac myocyte survival and adaptive angiogenesis for cardiac protection and/or repair after myocardial infarction (MI). Stimulates endothelial cell proliferation through a MAPK1/3-, STAT3- and CCND1-mediated signaling pathway. Inhibits cardiac myocyte apoptosis in a PI3K/AKT-dependent signaling pathway. The protein is Myeloid-derived growth factor of Bos taurus (Bovine).